A 697-amino-acid polypeptide reads, in one-letter code: Polyribonucleotide nucleotidyltransferase (697 aa).

Mg(2+) is bound by residues D488 and D494. Residues 555-614 (PTFEVITINPDKIRDVIGKGGATIRQITEETKAAIDIEDNGTVRVFGETKAAAKAAIAKI) form the KH domain. The S1 motif domain occupies 624 to 692 (GKIYDGKVIR…NRGRIKLTMK (69 aa)).

This sequence belongs to the polyribonucleotide nucleotidyltransferase family. Component of the RNA degradosome, which is a multiprotein complex involved in RNA processing and mRNA degradation. Mg(2+) is required as a cofactor.

The protein resides in the cytoplasm. It carries out the reaction RNA(n+1) + phosphate = RNA(n) + a ribonucleoside 5'-diphosphate. In terms of biological role, involved in mRNA degradation. Catalyzes the phosphorolysis of single-stranded polyribonucleotides processively in the 3'- to 5'-direction. The chain is Polyribonucleotide nucleotidyltransferase from Acinetobacter baumannii (strain AB307-0294).